The sequence spans 414 residues: FAD-dependent monooxygenase adaC (414 aa).

Glutamate 32, alanine 43, arginine 115, aspartate 325, and glycine 338 together coordinate FAD.

The protein belongs to the paxM FAD-dependent monooxygenase family. FAD serves as cofactor.

It carries out the reaction 3-(2,4-dioxopentyl)-3,6,8,9-tetrahydroxy-1-oxo-1,2,3,4-tetrahydroanthracene-2-carboxyl-[ACP] + NADPH + O2 + H(+) = 3-(2,4-dioxopentyl)-2,3,6,8,9-pentahydroxy-1-oxo-1,2,3,4-tetrahydroanthracene-2-carboxyl-[ACP] + NADP(+) + H2O. Its pathway is secondary metabolite biosynthesis. Its function is as follows. FAD-dependent monooxygenase; part of the gene cluster that mediates the biosynthesis of the linear tetracyclic TAN-1612 neuropeptide Y receptor antagonist. The decaketide backbone of TAN-1612 is synthesized by the non-reducing polyketide synthase adaA via condensation of one acetyl-CoA starter unit with 9 malonyl-CoA units. The FAD-dependent monooxygenase adaC then performs hydroxylation at C2 while the polaketide chain is still attached to the NRPKS adaA. The alpha-hydroxylation step at C2 appears to be crucial for the following C18-C1 Claisen cyclization and release of the C9-hydroxyl version of TAN-1612 from the NRPKS adaA, two steps performed by the lactamase-like protein adaB. Finally, the O-methyltransferase adaD performs the C9 O-methylation to complete the biosynthesis of TAN-1612. This Aspergillus niger (strain ATCC MYA-4892 / CBS 513.88 / FGSC A1513) protein is FAD-dependent monooxygenase adaC.